Reading from the N-terminus, the 199-residue chain is Cytosine-containing mismatch-binding protein 1 (199 aa).

A DNA-binding region (HMG box) is located at residues 123–197 (PKKPSSAFIL…QYDKFMKEAG (75 aa)).

Monomer.

It is found in the nucleus. In terms of biological role, binds to cytosines in base mismatches and opposite chemically altered guanines. May be involved in repair of DNA damage. The protein is Cytosine-containing mismatch-binding protein 1 of Schizosaccharomyces pombe (strain 972 / ATCC 24843) (Fission yeast).